The following is a 322-amino-acid chain: Digestive cysteine proteinase 1 (322 aa).

The first 16 residues, 1–16, serve as a signal peptide directing secretion; the sequence is MKVVALFLFGLALAAA. Positions 17–105 are cleaved as a propeptide — activation peptide; sequence NPSWEEFKGK…VFTSTDAAPE (89 aa). Intrachain disulfides connect C126–C170, C160–C203, and C262–C311. Residue C129 is part of the active site. Catalysis depends on residues H269 and N289.

It belongs to the peptidase C1 family.

Its activity is regulated as follows. Inhibited by E-64, antipain, leupeptin, heavy metal ions, iodoacetic acid, dithionitrobenzene, p-hydroxymercuri-benzoate; activated by mercaptoethanol and dithiothreitol. In Homarus americanus (American lobster), this protein is Digestive cysteine proteinase 1 (LCP1).